Reading from the N-terminus, the 935-residue chain is Isoleucine--tRNA ligase (935 aa).

The 'HIGH' region signature appears at 58-68 (PYANGSIHVGH). Residue glutamate 558 participates in L-isoleucyl-5'-AMP binding. A 'KMSKS' region motif is present at residues 599 to 603 (KMSKS). Lysine 602 serves as a coordination point for ATP. Zn(2+) is bound by residues cysteine 897, cysteine 900, cysteine 917, and cysteine 920.

It belongs to the class-I aminoacyl-tRNA synthetase family. IleS type 1 subfamily. Monomer. Requires Zn(2+) as cofactor.

Its subcellular location is the cytoplasm. The enzyme catalyses tRNA(Ile) + L-isoleucine + ATP = L-isoleucyl-tRNA(Ile) + AMP + diphosphate. In terms of biological role, catalyzes the attachment of isoleucine to tRNA(Ile). As IleRS can inadvertently accommodate and process structurally similar amino acids such as valine, to avoid such errors it has two additional distinct tRNA(Ile)-dependent editing activities. One activity is designated as 'pretransfer' editing and involves the hydrolysis of activated Val-AMP. The other activity is designated 'posttransfer' editing and involves deacylation of mischarged Val-tRNA(Ile). The protein is Isoleucine--tRNA ligase of Francisella philomiragia subsp. philomiragia (strain ATCC 25017 / CCUG 19701 / FSC 153 / O#319-036).